The following is a 173-amino-acid chain: NADH-ubiquinone oxidoreductase chain 6 (173 aa).

5 consecutive transmembrane segments (helical) span residues M1–S21, Y27–G47, V48–V68, G91–L111, and C139–L159.

This sequence belongs to the complex I subunit 6 family.

It is found in the mitochondrion membrane. The enzyme catalyses a ubiquinone + NADH + 5 H(+)(in) = a ubiquinol + NAD(+) + 4 H(+)(out). Core subunit of the mitochondrial membrane respiratory chain NADH dehydrogenase (Complex I) that is believed to belong to the minimal assembly required for catalysis. Complex I functions in the transfer of electrons from NADH to the respiratory chain. The immediate electron acceptor for the enzyme is believed to be ubiquinone. This chain is NADH-ubiquinone oxidoreductase chain 6 (MT-ND6), found in Fratercula cirrhata (Tufted puffin).